A 275-amino-acid polypeptide reads, in one-letter code: Chemotaxis protein methyltransferase Cher2 (275 aa).

A CheR-type methyltransferase domain is found at 1–275 (MSTGNLDFEQ…CSPGIIYQAK (275 aa)). S-adenosyl-L-methionine is bound by residues N73, T75, R79, E116, D145, 201 to 202 (NL), and 218 to 219 (RN).

In terms of assembly, monomer.

It catalyses the reaction L-glutamyl-[protein] + S-adenosyl-L-methionine = [protein]-L-glutamate 5-O-methyl ester + S-adenosyl-L-homocysteine. Its function is as follows. Methylation of the membrane-bound methyl-accepting chemotaxis proteins (MCP) to form gamma-glutamyl methyl ester residues in MCP. Methylates the McpS chemotaxis receptor. The protein is Chemotaxis protein methyltransferase Cher2 (cheR2) of Pseudomonas putida (strain ATCC 47054 / DSM 6125 / CFBP 8728 / NCIMB 11950 / KT2440).